Consider the following 343-residue polypeptide: Ribosomal RNA small subunit methyltransferase C (343 aa).

It belongs to the methyltransferase superfamily. RsmC family. Monomer.

Its subcellular location is the cytoplasm. It catalyses the reaction guanosine(1207) in 16S rRNA + S-adenosyl-L-methionine = N(2)-methylguanosine(1207) in 16S rRNA + S-adenosyl-L-homocysteine + H(+). In terms of biological role, specifically methylates the guanine in position 1207 of 16S rRNA in the 30S particle. The sequence is that of Ribosomal RNA small subunit methyltransferase C from Escherichia coli O7:K1 (strain IAI39 / ExPEC).